The sequence spans 131 residues: Small ribosomal subunit protein uS8 (131 aa).

It belongs to the universal ribosomal protein uS8 family. In terms of assembly, part of the 30S ribosomal subunit. Contacts proteins S5 and S12.

In terms of biological role, one of the primary rRNA binding proteins, it binds directly to 16S rRNA central domain where it helps coordinate assembly of the platform of the 30S subunit. This Blochmanniella pennsylvanica (strain BPEN) protein is Small ribosomal subunit protein uS8.